A 391-amino-acid chain; its full sequence is Transaldolase (391 aa).

The transaldolase stretch occupies residues 1–329 (MGKNLLEQLR…RLKVLDGQEH (329 aa)). The Schiff-base intermediate with substrate role is filled by K136. 2 EF-hand domains span residues 329-364 (HIKH…FDAL) and 365-387 (DRDH…AFRL). Ca(2+) is bound by residues D342, D344, D346, E353, D365, D367, D369, K371, and E376.

The protein belongs to the transaldolase family. Type 1 subfamily.

It localises to the cytoplasm. The catalysed reaction is D-sedoheptulose 7-phosphate + D-glyceraldehyde 3-phosphate = D-erythrose 4-phosphate + beta-D-fructose 6-phosphate. It participates in carbohydrate degradation; pentose phosphate pathway; D-glyceraldehyde 3-phosphate and beta-D-fructose 6-phosphate from D-ribose 5-phosphate and D-xylulose 5-phosphate (non-oxidative stage): step 2/3. Functionally, transaldolase is important for the balance of metabolites in the pentose-phosphate pathway. This is Transaldolase from Synechocystis sp. (strain ATCC 27184 / PCC 6803 / Kazusa).